A 357-amino-acid polypeptide reads, in one-letter code: Membrane-bound lytic murein transglycosylase C (357 aa).

A signal peptide spans 1–17 (MKLKKFLVLLLIPFLYA). C18 carries the N-palmitoyl cysteine lipid modification. The S-diacylglycerol cysteine moiety is linked to residue C18.

This sequence belongs to the transglycosylase Slt family.

It localises to the cell outer membrane. It carries out the reaction Exolytic cleavage of the (1-&gt;4)-beta-glycosidic linkage between N-acetylmuramic acid (MurNAc) and N-acetylglucosamine (GlcNAc) residues in peptidoglycan, from either the reducing or the non-reducing ends of the peptidoglycan chains, with concomitant formation of a 1,6-anhydrobond in the MurNAc residue.. Its function is as follows. Murein-degrading enzyme. May play a role in recycling of muropeptides during cell elongation and/or cell division. In Mannheimia succiniciproducens (strain KCTC 0769BP / MBEL55E), this protein is Membrane-bound lytic murein transglycosylase C.